Reading from the N-terminus, the 213-residue chain is Serine acetyltransferase (213 aa).

Belongs to the transferase hexapeptide repeat family.

It localises to the cytoplasm. It carries out the reaction L-serine + acetyl-CoA = O-acetyl-L-serine + CoA. Its pathway is amino-acid biosynthesis; L-cysteine biosynthesis; L-cysteine from L-serine: step 1/2. The sequence is that of Serine acetyltransferase (cysE) from Staphylococcus epidermidis (strain ATCC 35984 / DSM 28319 / BCRC 17069 / CCUG 31568 / BM 3577 / RP62A).